The primary structure comprises 134 residues: Large ribosomal subunit protein bL20 (134 aa).

Belongs to the bacterial ribosomal protein bL20 family.

Its function is as follows. Binds directly to 23S ribosomal RNA and is necessary for the in vitro assembly process of the 50S ribosomal subunit. It is not involved in the protein synthesizing functions of that subunit. This chain is Large ribosomal subunit protein bL20, found in Rhizobium leguminosarum bv. trifolii (strain WSM2304).